The following is a 625-amino-acid chain: Phosphomethylpyrimidine synthase (625 aa).

Residues Asn237, Met266, Tyr295, His331, 351–353, 392–395, and Glu431 contribute to the substrate site; these read SRG and DGLR. Residue His435 participates in Zn(2+) binding. Residue Tyr458 coordinates substrate. Zn(2+) is bound at residue His499. 3 residues coordinate [4Fe-4S] cluster: Cys579, Cys582, and Cys587.

This sequence belongs to the ThiC family. In terms of assembly, homodimer. It depends on [4Fe-4S] cluster as a cofactor.

It catalyses the reaction 5-amino-1-(5-phospho-beta-D-ribosyl)imidazole + S-adenosyl-L-methionine = 4-amino-2-methyl-5-(phosphooxymethyl)pyrimidine + CO + 5'-deoxyadenosine + formate + L-methionine + 3 H(+). The protein operates within cofactor biosynthesis; thiamine diphosphate biosynthesis. Its function is as follows. Catalyzes the synthesis of the hydroxymethylpyrimidine phosphate (HMP-P) moiety of thiamine from aminoimidazole ribotide (AIR) in a radical S-adenosyl-L-methionine (SAM)-dependent reaction. The sequence is that of Phosphomethylpyrimidine synthase from Cupriavidus metallidurans (strain ATCC 43123 / DSM 2839 / NBRC 102507 / CH34) (Ralstonia metallidurans).